The following is a 384-amino-acid chain: UDP-4-amino-4-deoxy-L-arabinose--oxoglutarate aminotransferase (384 aa).

Lys182 carries the N6-(pyridoxal phosphate)lysine modification.

Belongs to the DegT/DnrJ/EryC1 family. ArnB subfamily. In terms of assembly, homodimer. It depends on pyridoxal 5'-phosphate as a cofactor.

The catalysed reaction is UDP-4-amino-4-deoxy-beta-L-arabinose + 2-oxoglutarate = UDP-beta-L-threo-pentopyranos-4-ulose + L-glutamate. The protein operates within nucleotide-sugar biosynthesis; UDP-4-deoxy-4-formamido-beta-L-arabinose biosynthesis; UDP-4-deoxy-4-formamido-beta-L-arabinose from UDP-alpha-D-glucuronate: step 2/3. It functions in the pathway bacterial outer membrane biogenesis; lipopolysaccharide biosynthesis. In terms of biological role, catalyzes the conversion of UDP-4-keto-arabinose (UDP-Ara4O) to UDP-4-amino-4-deoxy-L-arabinose (UDP-L-Ara4N). The modified arabinose is attached to lipid A and is required for resistance to polymyxin and cationic antimicrobial peptides. In Yersinia pseudotuberculosis serotype O:1b (strain IP 31758), this protein is UDP-4-amino-4-deoxy-L-arabinose--oxoglutarate aminotransferase.